A 142-amino-acid chain; its full sequence is Alpha-lactalbumin (142 aa).

The signal sequence occupies residues 1 to 19 (MRFFVPLFLVGILFPAILA). In terms of domain architecture, C-type lysozyme spans 20–142 (KQFTKCELSQ…KLEQWLCEKL (123 aa)). 4 cysteine pairs are disulfide-bonded: C25–C139, C47–C130, C80–C96, and C92–C110. 2 residues coordinate Ca(2+): T57 and Q58. N-linked (GlcNAc...) asparagine glycosylation is present at N64. Zn(2+) is bound at residue E68. N-linked (GlcNAc...) asparagine; atypical; partial glycosylation is present at N90. Positions 98, 100, 101, 102, 103, 106, and 107 each coordinate Ca(2+). Residue E135 coordinates Zn(2+).

It belongs to the glycosyl hydrolase 22 family. Lactose synthase (LS) is a heterodimer of a catalytic component, beta1,4-galactosyltransferase (beta4Gal-T1) and a regulatory component, alpha-lactalbumin (LA). As to expression, mammary gland specific. Secreted in milk.

The protein localises to the secreted. Functionally, regulatory subunit of lactose synthase, changes the substrate specificity of galactosyltransferase in the mammary gland making glucose a good acceptor substrate for this enzyme. This enables LS to synthesize lactose, the major carbohydrate component of milk. In other tissues, galactosyltransferase transfers galactose onto the N-acetylglucosamine of the oligosaccharide chains in glycoproteins. The protein is Alpha-lactalbumin (LALBA) of Homo sapiens (Human).